The following is a 453-amino-acid chain: Membrane-bound acylglycerophosphatidylinositol O-acyltransferase mboa-7 (453 aa).

7 helical membrane passes run 4–24 (ILGL…FSFG), 36–56 (ILAS…PKIV), 79–99 (LYVF…HYIL), 154–174 (AYFY…QMLI), 195–215 (VRLL…PLDI), 220–240 (AIWE…FVVF), and 244–264 (VYSA…GIYP). Asparagine 319 carries an N-linked (GlcNAc...) asparagine glycan. Histidine 350 is a catalytic residue. A run of 2 helical transmembrane segments spans residues 354–374 (AGYF…DVIF) and 421–441 (FWSS…IYSA).

It belongs to the membrane-bound acyltransferase family. In terms of tissue distribution, expressed ubiquitously throughout development from early embryo to larval and adult stages. In adults, strongly expressed in pharyngeal muscle, body wall muscle, vulval cells, distal tip cells, intestinal cells and spermatheca.

It localises to the membrane. The catalysed reaction is 1-octadecanoyl-sn-glycero-3-phospho-(1D-myo-inositol) + (5Z,8Z,11Z,14Z,17Z)-eicosapentaenoyl-CoA = 1-octadecanoyl-2-(5Z,8Z,11Z,14Z,17Z-eicosapentaenoyl)-sn-glycero-3-phospho-(1D-myo-inositol) + CoA. The enzyme catalyses a 1-acyl-sn-glycero-3-phospho-(1D-myo-inositol) + (5Z,8Z,11Z,14Z,17Z)-eicosapentaenoyl-CoA = a 1-acyl-2-(5Z,8Z,11Z,14Z,17Z-eicosapentaenoyl)-sn-glycero-3-phospho-(1D-myo-inositol) + CoA. It carries out the reaction a 1-acyl-sn-glycero-3-phospho-(1D-myo-inositol) + (5Z,8Z,11Z,14Z)-eicosatetraenoyl-CoA = a 1-acyl-2-(5Z,8Z,11Z,14Z-eicosatetraenoyl)-sn-glycero-3-phospho-(1D-myo-inositol) + CoA. It participates in lipid metabolism; phospholipid metabolism. Functionally, acyltransferase which mediates the conversion of lysophosphatidylinositol (1-acyl-sn-glycero-3-phosphatidylinositol or LPI) into phosphatidylinositol (1,2-diacyl-sn-glycero-3-phosphoinositol or PI) (LPIAT activity). Prefers sn-2-LPI rather than sn-1-LPI as the acyl acceptor. Lysophospholipid acyltransferases (LPLATs) catalyze the reacylation step of the phospholipid remodeling pathway also known as the Lands cycle. Involved in the selective incorporation of arachidonoyl-CoA ((5Z,8Z,11Z,14Z)-eicosatetraenoyl-CoA) and (5Z,8Z,11Z,14Z,17Z)-eicosapentaenoyl-CoA (EPA-CoA) into PI. Besides its role in biomembranes, PI is a precursor of PI 3-phosphate (PIP3) and its fatty acid composition has an important role in PI3P signaling. The polypeptide is Membrane-bound acylglycerophosphatidylinositol O-acyltransferase mboa-7 (Caenorhabditis elegans).